Consider the following 462-residue polypeptide: Glycerol-3-phosphate acyltransferase ATS12, chloroplastic (462 aa).

A chloroplast-targeting transit peptide spans 1–82; sequence MFILSSSSST…DKESAQSAAT (82 aa). An HXXXXD motif motif is present at residues 233 to 238; that stretch reads HQTEAD.

This sequence belongs to the GPAT/DAPAT family.

The protein resides in the plastid. It localises to the chloroplast stroma. The catalysed reaction is a fatty acyl-[ACP] + sn-glycerol 3-phosphate = a 1-acyl-sn-glycero-3-phosphate + holo-[ACP]. The enzyme catalyses sn-glycerol 3-phosphate + an acyl-CoA = a 1-acyl-sn-glycero-3-phosphate + CoA. It functions in the pathway phospholipid metabolism; CDP-diacylglycerol biosynthesis; CDP-diacylglycerol from sn-glycerol 3-phosphate: step 1/3. Esterifies the acyl-group from acyl-acyl carrier proteins (acyl-ACPs) to the sn-1 position of glycerol-3-phosphate. The physiological acyl donors in chloroplasts are acyl-ACPs, but acyl-CoAs are used as artificial donor for in vitro reactions. The enzyme from chilling-resistant plants discriminates against non-fluid palmitic acid and selects oleic acid whereas the enzyme from sensitive plants accepts both fatty acids. Squash is chilling-sensitive. Does not seem to discriminate between the acyl-ACP thioesters 18:1-ACP, 18:0-ACP and 16:0-ACP. Exhibits higher selectivity for 16:0-CoA than 18:1-CoA in vitro. The polypeptide is Glycerol-3-phosphate acyltransferase ATS12, chloroplastic (Cucurbita moschata (Winter crookneck squash)).